The sequence spans 186 residues: Transposons Tn1721 resolvase (186 aa).

One can recognise a Resolvase/invertase-type recombinase catalytic domain in the interval 4–137; that stretch reads HRIGYVRVSS…EGIALAKQRG (134 aa). The O-(5'-phospho-DNA)-serine intermediate role is filled by Ser12. The segment at residues 164 to 183 is a DNA-binding region (H-T-H motif); that stretch reads KAQLAREFNISRETLYQYLR.

This sequence belongs to the site-specific recombinase resolvase family.

Resolvase catalyzes the resolution (a site-specific recombination) of the cointegrated replicon to yield the final transposition products. The sequence is that of Transposons Tn1721 resolvase (tnpR) from Escherichia coli.